We begin with the raw amino-acid sequence, 434 residues long: Methylenetetrahydrofolate--tRNA-(uracil-5-)-methyltransferase TrmFO (434 aa).

Position 10 to 15 (10 to 15) interacts with FAD; sequence GAGLAG.

The protein belongs to the MnmG family. TrmFO subfamily. FAD serves as cofactor.

It localises to the cytoplasm. The catalysed reaction is uridine(54) in tRNA + (6R)-5,10-methylene-5,6,7,8-tetrahydrofolate + NADH + H(+) = 5-methyluridine(54) in tRNA + (6S)-5,6,7,8-tetrahydrofolate + NAD(+). The enzyme catalyses uridine(54) in tRNA + (6R)-5,10-methylene-5,6,7,8-tetrahydrofolate + NADPH + H(+) = 5-methyluridine(54) in tRNA + (6S)-5,6,7,8-tetrahydrofolate + NADP(+). Catalyzes the folate-dependent formation of 5-methyl-uridine at position 54 (M-5-U54) in all tRNAs. The protein is Methylenetetrahydrofolate--tRNA-(uracil-5-)-methyltransferase TrmFO of Bacillus cereus (strain AH820).